The primary structure comprises 556 residues: Formate--tetrahydrofolate ligase (556 aa).

Residue 65–72 coordinates ATP; the sequence is TPAGEGKS.

Belongs to the formate--tetrahydrofolate ligase family.

The enzyme catalyses (6S)-5,6,7,8-tetrahydrofolate + formate + ATP = (6R)-10-formyltetrahydrofolate + ADP + phosphate. The protein operates within one-carbon metabolism; tetrahydrofolate interconversion. This is Formate--tetrahydrofolate ligase from Streptococcus pneumoniae (strain Hungary19A-6).